A 98-amino-acid polypeptide reads, in one-letter code: Peptide YY (98 aa).

Residues Met-1 to Ala-28 form the signal peptide. Ser-41 carries the post-translational modification Phosphoserine. Tyr-64 is subject to Tyrosine amide. A propeptide spanning residues Asp-68–Trp-98 is cleaved from the precursor.

The protein belongs to the NPY family. In terms of processing, the peptide YY form is cleaved at Pro-30 by the prolyl endopeptidase FAP (seprase) activity (in vitro) to generate peptide YY(3-36).

The protein localises to the secreted. Functionally, this gut peptide inhibits exocrine pancreatic secretion, has a vasoconstrictory action and inhibitis jejunal and colonic mobility. This is Peptide YY (Pyy) from Mus musculus (Mouse).